We begin with the raw amino-acid sequence, 660 residues long: Arginine--tRNA ligase, cytoplasmic (660 aa).

Residue M1 is modified to N-acetylmethionine. The segment at 1–72 is could be involved in the assembly of the multisynthetase complex; it reads MDALVAHCSA…QAERNKPTKT (72 aa). Residues 200–202, H211, Y384, D388, and Q412 contribute to the L-arginine site; that span reads SPN. The 'HIGH' region signature appears at 201-212; sequence PNIAKEMHVGHL. Residues 529-543 form an interaction with tRNA region; it reads NTAAYLLYAFTRIRS.

It belongs to the class-I aminoacyl-tRNA synthetase family. In terms of assembly, interacts (via N-terminus) with AIMP1 (via N-terminus); this stimulates its catalytic activity. Interacts (via N-terminus) with LARS2 (via C-terminus). Monomer. Part of a multisubunit complex that groups tRNA ligases for Arg (RARS1), Asp (DARS1), Gln (QARS1), Ile (IARS1), Leu (LARS1), Lys (KARS1), Met (MARS1) the bifunctional ligase for Glu and Pro (EPRS1) and the auxiliary subunits AIMP1/p43, AIMP2/p38 and EEF1E1/p18. Interacts with QARS1. Part of a complex composed of RARS1, QARS1 and AIMP1.

It localises to the cytoplasm. The protein localises to the cytosol. The enzyme catalyses tRNA(Arg) + L-arginine + ATP = L-arginyl-tRNA(Arg) + AMP + diphosphate. Forms part of a macromolecular complex that catalyzes the attachment of specific amino acids to cognate tRNAs during protein synthesis. Modulates the secretion of AIMP1 and may be involved in generation of the inflammatory cytokine EMAP2 from AIMP1. This Bos taurus (Bovine) protein is Arginine--tRNA ligase, cytoplasmic (RARS1).